The primary structure comprises 229 residues: Heptaprenylglyceryl phosphate synthase (229 aa).

A sn-glycerol 1-phosphate-binding site is contributed by K12. 2 residues coordinate Mg(2+): D14 and T40. Residues 159–164 (YIEYSG), G189, and 209–210 (GN) contribute to the sn-glycerol 1-phosphate site.

The protein belongs to the GGGP/HepGP synthase family. Group I subfamily. In terms of assembly, homodimer. Requires Mg(2+) as cofactor.

It carries out the reaction sn-glycerol 1-phosphate + all-trans-heptaprenyl diphosphate = 3-heptaprenyl-sn-glycero-1-phosphate + diphosphate. It functions in the pathway membrane lipid metabolism; glycerophospholipid metabolism. In terms of biological role, prenyltransferase that catalyzes in vivo the transfer of the heptaprenyl moiety of heptaprenyl pyrophosphate (HepPP; 35 carbon atoms) to the C3 hydroxyl of sn-glycerol-1-phosphate (G1P), producing heptaprenylglyceryl phosphate (HepGP). This reaction is an ether-bond-formation step in the biosynthesis of archaea-type G1P-based membrane lipids found in Bacillales. This is Heptaprenylglyceryl phosphate synthase from Oceanobacillus iheyensis (strain DSM 14371 / CIP 107618 / JCM 11309 / KCTC 3954 / HTE831).